The chain runs to 560 residues: DNA-directed primase/polymerase protein (560 aa).

Residues 1–22 are a coiled coil; that stretch reads MNRKWEAKLKQIEERASHYERK. Substrate contacts are provided by residues arginine 76, 114-116, and 165-169; these read DLE and KFSRH. Mn(2+)-binding residues include aspartate 114 and glutamate 116. A disordered region spans residues 203-223; sequence EDDDSAPETTGHGFPHFSEAP. At serine 255 the chain carries Phosphoserine. Residues 288–291 and lysine 297 contribute to the substrate site; that span reads RNFR. 4 residues coordinate Zn(2+): cysteine 419, histidine 426, cysteine 446, and cysteine 451. A Zinc knuckle motif motif is present at residues 419–452; sequence CENIGRAHKSNNIMILVDLKNEVWYQKCHDPVCK. A disordered region spans residues 480–507; sequence TTDEADETRSNETQNPHKPSPSRLSTGA. Positions 481 to 560 are interaction with RPA1; it reads TDEADETRSN…DELIIEVLQE (80 aa). Polar residues predominate over residues 490 to 507; that stretch reads NETQNPHKPSPSRLSTGA. 2 short sequence motifs (RPA1-binding motif) span residues 513-527 and 548-556; these read WDNGIDDAYFLEATE and EIPDELIIE.

Belongs to the eukaryotic-type primase small subunit family. Interacts with RPA1; leading to recruitment to chromatin and stimulate DNA primase activity. Interacts with SSBP1. Interacts with POLDIP2; leading to enhance DNA polymerase activity. Mn(2+) serves as cofactor.

It localises to the nucleus. Its subcellular location is the mitochondrion matrix. The protein resides in the chromosome. The enzyme catalyses ssDNA + n NTP = ssDNA/pppN(pN)n-1 hybrid + (n-1) diphosphate.. The catalysed reaction is DNA(n) + a 2'-deoxyribonucleoside 5'-triphosphate = DNA(n+1) + diphosphate. Its function is as follows. DNA primase and DNA polymerase required to tolerate replication-stalling lesions by bypassing them. Required to facilitate mitochondrial and nuclear replication fork progression by initiating de novo DNA synthesis using dNTPs and acting as an error-prone DNA polymerase able to bypass certain DNA lesions. Shows a high capacity to tolerate DNA damage lesions such as 8oxoG and abasic sites in DNA. Provides different translesion synthesis alternatives when DNA replication is stalled: able to synthesize DNA primers downstream of lesions, such as ultraviolet (UV) lesions, R-loops and G-quadruplexes, to allow DNA replication to continue. Can also realign primers ahead of 'unreadable lesions' such as abasic sites and 6-4 photoproduct (6-4 pyrimidine-pyrimidinone), thereby skipping the lesion. Repriming avoids fork degradation while leading to accumulation of internal ssDNA gaps behind the forks. Also able to incorporate nucleotides opposite DNA lesions such as 8oxoG, like a regular translesion synthesis DNA polymerase. Also required for reinitiating stalled forks after UV damage during nuclear DNA replication. Required for mitochondrial DNA (mtDNA) synthesis and replication, by reinitiating synthesis after UV damage or in the presence of chain-terminating nucleotides. Prevents APOBEC family-mediated DNA mutagenesis by repriming downstream of abasic site to prohibit error-prone translesion synthesis. Has non-overlapping function with POLH. In addition to its role in DNA damage response, also required to maintain efficient nuclear and mitochondrial DNA replication in unperturbed cells. This is DNA-directed primase/polymerase protein from Homo sapiens (Human).